The primary structure comprises 137 residues: Small ribosomal subunit protein eS19 (137 aa).

It belongs to the eukaryotic ribosomal protein eS19 family. As to quaternary structure, component of the small ribosomal subunit.

The protein localises to the cytoplasm. This chain is Small ribosomal subunit protein eS19 (RPS19), found in Encephalitozoon cuniculi (strain GB-M1) (Microsporidian parasite).